A 255-amino-acid polypeptide reads, in one-letter code: Hemin import ATP-binding protein HmuV (255 aa).

The ABC transporter domain maps to 2–238; sequence LRVENLSIRR…EPLRAVFGLE (237 aa). Position 34-41 (34-41) interacts with ATP; that stretch reads GPNGAGKS.

The protein belongs to the ABC transporter superfamily. Heme (hemin) importer (TC 3.A.1.14.5) family. In terms of assembly, the complex is composed of two ATP-binding proteins (HmuV), two transmembrane proteins (HmuU) and a solute-binding protein (HmuT).

It localises to the cell inner membrane. In terms of biological role, part of the ABC transporter complex HmuTUV involved in hemin import. Responsible for energy coupling to the transport system. This is Hemin import ATP-binding protein HmuV from Pseudomonas aeruginosa (strain ATCC 15692 / DSM 22644 / CIP 104116 / JCM 14847 / LMG 12228 / 1C / PRS 101 / PAO1).